A 162-amino-acid chain; its full sequence is Phosphopantetheine adenylyltransferase (162 aa).

Thr-14 contacts substrate. ATP contacts are provided by residues 14–15 (TF) and His-22. Residues Lys-46, Leu-78, and Arg-92 each contribute to the substrate site. ATP contacts are provided by residues 93 to 95 (GLR), Glu-103, and 128 to 134 (HSFISSS).

The protein belongs to the bacterial CoaD family. In terms of assembly, homohexamer. Mg(2+) serves as cofactor.

The protein resides in the cytoplasm. The enzyme catalyses (R)-4'-phosphopantetheine + ATP + H(+) = 3'-dephospho-CoA + diphosphate. Its pathway is cofactor biosynthesis; coenzyme A biosynthesis; CoA from (R)-pantothenate: step 4/5. In terms of biological role, reversibly transfers an adenylyl group from ATP to 4'-phosphopantetheine, yielding dephospho-CoA (dPCoA) and pyrophosphate. The chain is Phosphopantetheine adenylyltransferase from Xylella fastidiosa (strain 9a5c).